Reading from the N-terminus, the 294-residue chain is Putative lipid kinase SP_1045 (294 aa).

The region spanning 1–131 (MKKAMVIINP…IDIGKANDNY (131 aa)) is the DAGKc domain. ATP-binding positions include 9-13 (NPTSG), Thr40, 66-72 (GDGTVNE), and Thr93. Asp212 and Tyr214 together coordinate Mg(2+). Asp269 serves as the catalytic Proton acceptor.

Belongs to the diacylglycerol/lipid kinase family. Mg(2+) serves as cofactor.

Its function is as follows. May catalyze the ATP-dependent phosphorylation of lipids other than diacylglycerol (DAG). In fact, is not able to exhibit diacylglycerol kinase activity in vitro. This Streptococcus pneumoniae serotype 4 (strain ATCC BAA-334 / TIGR4) protein is Putative lipid kinase SP_1045.